The chain runs to 432 residues: Peptidase B (432 aa).

2 residues coordinate Mn(2+): Lys-196 and Asp-201. Lys-208 is a catalytic residue. Mn(2+)-binding residues include Asp-219, Asp-278, and Glu-280. The active site involves Arg-282.

Belongs to the peptidase M17 family. In terms of assembly, homohexamer. It depends on Mn(2+) as a cofactor.

The protein localises to the cytoplasm. The catalysed reaction is Release of an N-terminal amino acid, Xaa, from a peptide or arylamide. Xaa is preferably Glu or Asp but may be other amino acids, including Leu, Met, His, Cys and Gln.. Probably plays an important role in intracellular peptide degradation. This is Peptidase B from Yersinia pseudotuberculosis serotype O:1b (strain IP 31758).